The sequence spans 436 residues: 2-aminohexano-6-lactam racemase (436 aa).

Residues Gly-110–Ser-111, Tyr-137, and Asp-238–Lys-241 contribute to the pyridoxal 5'-phosphate site. Tyr-137 is a catalytic residue. An N6-(pyridoxal phosphate)lysine modification is found at Lys-267. Thr-295 contributes to the pyridoxal 5'-phosphate binding site.

This sequence belongs to the class-III pyridoxal-phosphate-dependent aminotransferase family. Monomer. Pyridoxal 5'-phosphate is required as a cofactor.

The enzyme catalyses L-2-aminohexano-6-lactam = D-2-aminohexano-6-lactam. Its function is as follows. catalyzes the interconversion of L-alpha-amino-epsilon-caprolactam and D-alpha-amino-epsilon-caprolactam. The protein is 2-aminohexano-6-lactam racemase of Achromobacter obae.